Reading from the N-terminus, the 119-residue chain is Large ribosomal subunit protein bL20 (119 aa).

The protein belongs to the bacterial ribosomal protein bL20 family.

Functionally, binds directly to 23S ribosomal RNA and is necessary for the in vitro assembly process of the 50S ribosomal subunit. It is not involved in the protein synthesizing functions of that subunit. The protein is Large ribosomal subunit protein bL20 of Alkalilimnicola ehrlichii (strain ATCC BAA-1101 / DSM 17681 / MLHE-1).